Here is a 972-residue protein sequence, read N- to C-terminus: Hemoglobin and hemoglobin-haptoglobin-binding protein (972 aa).

The N-terminal stretch at 1-22 is a signal peptide; that stretch reads MKANKLSAITLCILGYAHTVYA. Positions 32–39 match the TonB box motif; the sequence is ETIVVSSE. One can recognise a TBDR plug domain in the interval 38–167; the sequence is SEDDSVHNKN…LGGTVSFESK (130 aa). In terms of domain architecture, TBDR beta-barrel spans 175-972; it reads DKNYHFGYKT…NFRVNAEITF (798 aa). The TonB C-terminal box signature appears at 955–972; that stretch reads KRFNAPGRNFRVNAEITF.

Belongs to the TonB-dependent receptor family. Hemoglobin/haptoglobin binding protein subfamily.

It localises to the cell outer membrane. Acts as a receptor for hemoglobin or the hemoglobin/haptoglobin complex of the host and is required for heme uptake. May be involved in virulence. The protein is Hemoglobin and hemoglobin-haptoglobin-binding protein of Haemophilus ducreyi (strain 35000HP / ATCC 700724).